A 797-amino-acid polypeptide reads, in one-letter code: Speckle targeted PIP5K1A-regulated poly(A) polymerase (797 aa).

The Matrin-type zinc finger occupies 14-44; sequence FHCNLCHVNIPNRPSLEDHVKGKKHLHLLRL. The 73-residue stretch at 54–126 folds into the RRM domain; sequence NSVFVSGFKA…LKLRVKPREK (73 aa). S205 is a binding site for ATP. Mg(2+) contacts are provided by D216 and D218. UTP-binding residues include D216, D218, N319, R341, Y363, and H495. N319 is an ATP binding site. Residues 421-495 form the PAP-associated domain; the sequence is DLCTLLFGFF…NVLDPFELNH (75 aa). Positions 544-787 are KA1; binds the bulging loops of U6 snRNA but is dispensable for terminal uridylyltransferase activity; sequence QSEAAASSQP…FLPKMAETIM (244 aa). Residues 611–659 are disordered; sequence EETQSLDKTDKSGSEMEVNNNRSLEDTNIQVKGEAGKKRPLSVEEGPST. A compositionally biased stretch (basic and acidic residues) spans 615–624; the sequence is SLDKTDKSGS. Over residues 627-640 the composition is skewed to polar residues; sequence EVNNNRSLEDTNIQ.

Belongs to the DNA polymerase type-B-like family. Associates with the cleavage and polyadenylation specificity factor (CPSF) complex. It depends on Mg(2+) as a cofactor. Mn(2+) serves as cofactor.

The protein localises to the nucleus. Its subcellular location is the nucleolus. The protein resides in the nucleus speckle. The enzyme catalyses RNA(n) + UTP = RNA(n)-3'-uridine ribonucleotide + diphosphate. It catalyses the reaction RNA(n) + ATP = RNA(n)-3'-adenine ribonucleotide + diphosphate. In terms of biological role, poly(A) polymerase that creates the 3'-poly(A) tail of specific pre-mRNAs. In addition to polyadenylation, it is also required for the 3'-end cleavage of pre-mRNAs: binds to the 3'UTR of targeted pre-mRNAs and promotes the recruitment and assembly of the CPSF complex on the 3'UTR of pre-mRNAs. In addition to adenylyltransferase activity, also has uridylyltransferase activity. However, the ATP ratio is higher than UTP in cells, suggesting that it functions primarily as a poly(A) polymerase. This chain is Speckle targeted PIP5K1A-regulated poly(A) polymerase (tut1), found in Danio rerio (Zebrafish).